The chain runs to 188 residues: Crossover junction endodeoxyribonuclease RuvC (188 aa).

Catalysis depends on residues aspartate 7, glutamate 68, and aspartate 141. Mg(2+)-binding residues include aspartate 7, glutamate 68, and aspartate 141.

This sequence belongs to the RuvC family. In terms of assembly, homodimer which binds Holliday junction (HJ) DNA. The HJ becomes 2-fold symmetrical on binding to RuvC with unstacked arms; it has a different conformation from HJ DNA in complex with RuvA. In the full resolvosome a probable DNA-RuvA(4)-RuvB(12)-RuvC(2) complex forms which resolves the HJ. It depends on Mg(2+) as a cofactor.

Its subcellular location is the cytoplasm. The catalysed reaction is Endonucleolytic cleavage at a junction such as a reciprocal single-stranded crossover between two homologous DNA duplexes (Holliday junction).. In terms of biological role, the RuvA-RuvB-RuvC complex processes Holliday junction (HJ) DNA during genetic recombination and DNA repair. Endonuclease that resolves HJ intermediates. Cleaves cruciform DNA by making single-stranded nicks across the HJ at symmetrical positions within the homologous arms, yielding a 5'-phosphate and a 3'-hydroxyl group; requires a central core of homology in the junction. The consensus cleavage sequence is 5'-(A/T)TT(C/G)-3'. Cleavage occurs on the 3'-side of the TT dinucleotide at the point of strand exchange. HJ branch migration catalyzed by RuvA-RuvB allows RuvC to scan DNA until it finds its consensus sequence, where it cleaves and resolves the cruciform DNA. The polypeptide is Crossover junction endodeoxyribonuclease RuvC (Mycobacterium leprae (strain TN)).